The chain runs to 115 residues: Nucleoid-associated protein Ava_2322 (115 aa).

Belongs to the YbaB/EbfC family. Homodimer.

It localises to the cytoplasm. The protein resides in the nucleoid. Functionally, binds to DNA and alters its conformation. May be involved in regulation of gene expression, nucleoid organization and DNA protection. In Trichormus variabilis (strain ATCC 29413 / PCC 7937) (Anabaena variabilis), this protein is Nucleoid-associated protein Ava_2322.